The sequence spans 251 residues: Short chain dehydrogenase gsfK (251 aa).

Positions 14, 33, 60, 88, and 122 each coordinate NADP(+). Residues Ser143 and Tyr161 each act as proton donor in the active site. Tyr161, Lys165, Val192, and Thr194 together coordinate NADP(+). Lys165 serves as the catalytic Lowers pKa of active site Tyr.

This sequence belongs to the short-chain dehydrogenases/reductases (SDR) family.

The protein operates within secondary metabolite biosynthesis; terpenoid biosynthesis. Its function is as follows. Short chain dehydrogenase; part of the gene cluster that mediates the biosynthesis of griseofulvin, an important antifungal drug that has been in use for a long time for treating dermatophyte infections. The first step of the pathway is the formation of the heptaketide backbone by gsfA which is initiated by priming with acetyl-CoA, followed by sequential condensations of 6 malonyl-CoA units. The resulting benzophenone can undergo a spontaneous dehydration to form norlichexanthone. However, the true precursor for the griseofulvin biosynthesis is not norlichexanthone, but the heptaketide benzophenone that is O-methylated at 3-OH by gsfB to produce griseophenone D which is further methylated at 9-OH by gsfC to yield griseophenone C. Griseophenone C is then substrate of halogenase gsfI which is responsible for the regio-specific chlorination at the C13 position to form griseophenone B. The cytochrome P450 gsfF catalyzes the coupling of orcinol and phloroglucinol rings in griseophenone B to form desmethyl-dehydrogriseofulvin A which is further methylated at 5-OH by gsfD to yield dehydrogriseofulvin. Finally, gsfE performs stereospecific reduction of enone 18 of dehydrogriseofulvin to afford the final product griseofulvin. The exact role of gsfK within the pathway has not been identified yet. This Penicillium aethiopicum protein is Short chain dehydrogenase gsfK.